A 1087-amino-acid chain; its full sequence is Error-prone DNA polymerase 2 (1087 aa).

The interval 1033–1064 is disordered; sequence DGAFRPPTGRGDEFAHGSPGSADSRGKAPPGV.

It belongs to the DNA polymerase type-C family. DnaE2 subfamily.

It localises to the cytoplasm. The catalysed reaction is DNA(n) + a 2'-deoxyribonucleoside 5'-triphosphate = DNA(n+1) + diphosphate. Functionally, DNA polymerase involved in damage-induced mutagenesis and translesion synthesis (TLS). It is not the major replicative DNA polymerase. The protein is Error-prone DNA polymerase 2 of Rhizobium meliloti (strain 1021) (Ensifer meliloti).